A 343-amino-acid chain; its full sequence is Methionine import ATP-binding protein MetN (343 aa).

Positions 2–241 (IKLSNITKVF…PKTPLAQKFI (240 aa)) constitute an ABC transporter domain. Position 38–45 (38–45 (GASGAGKS)) interacts with ATP.

It belongs to the ABC transporter superfamily. Methionine importer (TC 3.A.1.24) family. The complex is composed of two ATP-binding proteins (MetN), two transmembrane proteins (MetI) and a solute-binding protein (MetQ).

It localises to the cell inner membrane. The catalysed reaction is L-methionine(out) + ATP + H2O = L-methionine(in) + ADP + phosphate + H(+). The enzyme catalyses D-methionine(out) + ATP + H2O = D-methionine(in) + ADP + phosphate + H(+). Functionally, part of the ABC transporter complex MetNIQ involved in methionine import. Responsible for energy coupling to the transport system. This Escherichia coli O6:K15:H31 (strain 536 / UPEC) protein is Methionine import ATP-binding protein MetN.